Consider the following 608-residue polypeptide: Pentatricopeptide repeat-containing protein At5g40410, mitochondrial (608 aa).

The transit peptide at 1–28 directs the protein to the mitochondrion; it reads MIKANVYSCSKFRFLYRRRFLSQSSFVH. PPR repeat units lie at residues 30–64, 65–95, 96–130, 133–167, 168–198, 199–233, 234–268, 269–299, 300–334, 335–365, and 371–401; these read LDANVSSLIAAVKSCVSIELCRLLHCKVVKSVSYR, HGFIGDQLVGCYLRLGHDVCAEKLFDEMPER, DLVSWNSLISGYSGRGYLGKCFEVLSRMMISEVGF, NEVTFLSMISACVYGGSKEEGRCIHGLVMKFGVLE, EVKVVNAFINWYGKTGDLTSSCKLFEDLSIK, NLVSWNTMIVIHLQNGLAEKGLAYFNMSRRVGHEP, DQATFLAVLRSCEDMGVVRLAQGIHGLIMFGGFSG, NKCITTALLDLYSKLGRLEDSSTVFHEITSP, DSMAWTAMLAAYATHGFGRDAIKHFELMVHYGISP, DHVTFTHLLNACSHSGLVEEGKHYFETMSKR, and RLDHYSCMVDLLGRSGLLQDAYGLIKEMPME. Residues 406–481 form a type E motif region; that stretch reads VWGALLGACR…ASGCSYIEHG (76 aa). Positions 482–512 are type E(+) motif; sequence NKIHKFVVGDWSHPESEKIQKKLKEIRKKMK. A type DYW motif region spans residues 514–608; sequence EMGYKSKTEF…DGSCSCSDYW (95 aa).

This sequence belongs to the PPR family. PCMP-H subfamily.

The protein resides in the mitochondrion. The protein is Pentatricopeptide repeat-containing protein At5g40410, mitochondrial (PCMP-H15) of Arabidopsis thaliana (Mouse-ear cress).